A 706-amino-acid polypeptide reads, in one-letter code: Glutamine-dependent NAD(+) synthetase (706 aa).

A CN hydrolase domain is found at 5–275 (VTVATCALNQ…VEVLTATLDL (271 aa)). Glu-45 (proton acceptor; for glutaminase activity) is an active-site residue. The active-site For glutaminase activity is Lys-114. Cys-175 (nucleophile; for glutaminase activity) is an active-site residue. Residues 325-706 (YHSPAEEISL…RQRQELDGVD (382 aa)) form a ligase region. 355 to 362 (PLSGGVDS) serves as a coordination point for ATP. Residue Ser-357 is part of the active site.

The protein in the C-terminal section; belongs to the NAD synthetase family. As to quaternary structure, homohexamer.

The catalysed reaction is deamido-NAD(+) + L-glutamine + ATP + H2O = L-glutamate + AMP + diphosphate + NAD(+) + H(+). It participates in cofactor biosynthesis; NAD(+) biosynthesis; NAD(+) from deamido-NAD(+) (L-Gln route): step 1/1. Functionally, catalyzes the ATP-dependent amidation of deamido-NAD to form NAD. Uses L-glutamine as a nitrogen source. The protein is Glutamine-dependent NAD(+) synthetase (NADSYN1) of Bos taurus (Bovine).